Reading from the N-terminus, the 328-residue chain is Probable cell division protein WhiA (328 aa).

Positions 273–306 (SLEELGALADPPLTKDAVAGRIRRLLAMADKRAS) form a DNA-binding region, H-T-H motif.

The protein belongs to the WhiA family. In terms of assembly, monomer in solution.

Its function is as follows. Involved in cell division and chromosome segregation. Involved in sporulation. May coordinate the cessation of aerial hyphae growth and subsequent chromosome segregation and/or septation. Required for expression of the ParB partioning protein during sporogenesis. Activates its own transcription and represses WhiB. Binds with low affinity to its own promoter and to the Parp2 sporulation-specific promoter. Also binds directly to the RNA polymerase sigma factor WhiG, leading to inhibition of WhiG-dependent transcription in a dose-dependent manner. The sequence is that of Probable cell division protein WhiA from Streptomyces coelicolor (strain ATCC BAA-471 / A3(2) / M145).